The following is a 117-amino-acid chain: Hemerythrin subunit alpha (117 aa).

Residues His24, His53, Glu57, His72, His76, His105, and Asp110 each contribute to the Fe cation site.

The protein belongs to the hemerythrin family. In terms of assembly, octamer composed of two types of chains: alpha and beta.

In terms of biological role, hemerythrin is a respiratory protein in blood cells of certain marine worms. The oxygen-binding site in each chain contains two iron atoms. The polypeptide is Hemerythrin subunit alpha (Lingula anatina (Brachiopod)).